The sequence spans 955 residues: MTRKNTTTNPWAKFHGPNLGYVIEQYDLYVTGAGSVDPELQELFEIFGAPSFQDDVVTGDNTATHFSPQNTGNIEKILKVVQLVEQIRSFGHTLAHINPMEDAANGQSLLERAMNELSDADLKAIPAKTVWQDAPEGIHTALDVIHRLKEVYTQSLAYEFSHIQDSEERAWLHQMVESNSLRQPLSNKKRTALLKRLTAVEGFEQFLHKTFVGQKRFSIEGVDMLVPVLDEIVLEGAKNGVEDVMIGMAHRGRLSVLAHVLEKPYSHMFAEFKHAKIEGAVANSGWTGDVKYHLGREQVVSNEEVSTRVTLANNPSHLEFVNPVVEGFARAAQENRKKSGLPEQDTSKSFVILVHGDAAFPGQGIVSETLNLSRLNAYQTGGTIHVIANNAVGFTTDSYDSRSTKYSSDLAKGFDIPIVHVNADDPEACLAAANLAIQYRMLFKKDFLIDLIGYRRYGHNEMDDPAVTQPQVYKKIKNHPTVRAIYADQLQAAGVLNADEIETITQFTQEQLKSDYAQVPPADTSDATIHVKVPDVVAKGIQPIDTGVELDSLRAINEGLLSWPEGFNVYPKVKKILERRKDALEENGKIEWALAESLAFASILQEGTPIRLTGQDSQRGTFAHRHIVLHDTDTNETYSPLHRLPNINASFSVHNSPLSEAAVVGYEYGYNVFAPETLVMWEAQYGDFSNTAQALFDQYVSAGRAKWGQKSGLVLLLPHGYEGQGPEHSSARPERFLQLAAENNWTVANLTSAAQYFHILRRQASILGTEAVRPLVLMTPKSLLRHPLTLSTASQLSEGRFQPALEQENLGTKPNKVKRLVLSTGKMAIDLAAEIESGKHEYNLDEIHIVRIEQLYPFPAEKVQSIIKRFKNLEEIIWVQEEPRNMGAWHYMAPILFELAGDKVKTGYIGRPDRSSPSGGDPFAHKAEQELIVAHALDVKYNFRQDKLEIEVFSN.

The protein belongs to the alpha-ketoglutarate dehydrogenase family. As to quaternary structure, homodimer. Part of the 2-oxoglutarate dehydrogenase (OGDH) complex composed of E1 (2-oxoglutarate dehydrogenase), E2 (dihydrolipoamide succinyltransferase) and E3 (dihydrolipoamide dehydrogenase); the complex contains multiple copies of the three enzymatic components (E1, E2 and E3). Thiamine diphosphate is required as a cofactor.

It catalyses the reaction N(6)-[(R)-lipoyl]-L-lysyl-[protein] + 2-oxoglutarate + H(+) = N(6)-[(R)-S(8)-succinyldihydrolipoyl]-L-lysyl-[protein] + CO2. Functionally, E1 component of the 2-oxoglutarate dehydrogenase (OGDH) complex which catalyzes the decarboxylation of 2-oxoglutarate, the first step in the conversion of 2-oxoglutarate to succinyl-CoA and CO(2). The sequence is that of 2-oxoglutarate dehydrogenase E1 component from Bacillus cereus (strain ZK / E33L).